Consider the following 340-residue polypeptide: MGGARRLKLDGSIPNQLARAADAAVALERNGFDGGWTAEASHDPFLPLLLAAEHTSRLELGTNIAVAFARNPMIVANVGWDLQTYSKGRLILGLGTQIRPHIEKRFSMPWGHPARRMREFVAALRAIWLAWQDGTKLCFEGEFYTHKIMTPMFTPEPQPYPVPRVFIAAVGEAMTEMCGEVADGHLGHPMVSKRYLTEVSVPALLRGLARSGRDRSAFEVSCEVMVATGADDAELAAACTATRKQIAFYGSTPAYRKVLEQHGWGDLHPELHRLSKLGEWEAMGGLIDDEMLGAFAVVGPVDTIAGALRNRCEGVVDRVLPIFMAASQECINAALQDFRR.

The signal sequence occupies residues 1–20 (MGGARRLKLDGSIPNQLARA).

This is an uncharacterized protein from Mycobacterium tuberculosis (strain CDC 1551 / Oshkosh).